The primary structure comprises 701 residues: DNA ligase (701 aa).

Residues Asp-50–Asp-54, Ser-99–Leu-100, and Glu-130 contribute to the NAD(+) site. The active-site N6-AMP-lysine intermediate is Lys-132. NAD(+)-binding residues include Arg-153, Glu-187, Lys-301, and Lys-325. Zn(2+) contacts are provided by Cys-419, Cys-422, Cys-437, and Cys-442. The BRCT domain maps to Asn-626–Asn-701.

It belongs to the NAD-dependent DNA ligase family. LigA subfamily. Requires Mg(2+) as cofactor. Mn(2+) serves as cofactor.

The enzyme catalyses NAD(+) + (deoxyribonucleotide)n-3'-hydroxyl + 5'-phospho-(deoxyribonucleotide)m = (deoxyribonucleotide)n+m + AMP + beta-nicotinamide D-nucleotide.. DNA ligase that catalyzes the formation of phosphodiester linkages between 5'-phosphoryl and 3'-hydroxyl groups in double-stranded DNA using NAD as a coenzyme and as the energy source for the reaction. It is essential for DNA replication and repair of damaged DNA. The chain is DNA ligase from Malacoplasma penetrans (strain HF-2) (Mycoplasma penetrans).